The chain runs to 187 residues: Orotate phosphoribosyltransferase (187 aa).

110-118 provides a ligand contact to 5-phospho-alpha-D-ribose 1-diphosphate; that stretch reads EDVVTTGGS. Thr114 and Arg142 together coordinate orotate.

The protein belongs to the purine/pyrimidine phosphoribosyltransferase family. PyrE subfamily. Homodimer. Mg(2+) serves as cofactor.

The enzyme catalyses orotidine 5'-phosphate + diphosphate = orotate + 5-phospho-alpha-D-ribose 1-diphosphate. Its pathway is pyrimidine metabolism; UMP biosynthesis via de novo pathway; UMP from orotate: step 1/2. Its function is as follows. Catalyzes the transfer of a ribosyl phosphate group from 5-phosphoribose 1-diphosphate to orotate, leading to the formation of orotidine monophosphate (OMP). This is Orotate phosphoribosyltransferase from Thermotoga maritima (strain ATCC 43589 / DSM 3109 / JCM 10099 / NBRC 100826 / MSB8).